The sequence spans 720 residues: Methionine--tRNA ligase (720 aa).

Residues Pro27–His37 carry the 'HIGH' region motif. Zn(2+) contacts are provided by Cys158, Cys161, Cys171, and Cys174. Residues Lys348–Ser352 carry the 'KMSKS' region motif. An ATP-binding site is contributed by Lys351. The 107-residue stretch at Asp614 to Lys720 folds into the tRNA-binding domain.

This sequence belongs to the class-I aminoacyl-tRNA synthetase family. MetG type 1 subfamily. Homodimer. Zn(2+) serves as cofactor.

It localises to the cytoplasm. It carries out the reaction tRNA(Met) + L-methionine + ATP = L-methionyl-tRNA(Met) + AMP + diphosphate. Functionally, is required not only for elongation of protein synthesis but also for the initiation of all mRNA translation through initiator tRNA(fMet) aminoacylation. The sequence is that of Methionine--tRNA ligase from Burkholderia ambifaria (strain ATCC BAA-244 / DSM 16087 / CCUG 44356 / LMG 19182 / AMMD) (Burkholderia cepacia (strain AMMD)).